The sequence spans 317 residues: Olfactory receptor 10AD1 (317 aa).

Residues 1–25 (MLRNGSIVTEFILVGFQQSSTSTRA) are Extracellular-facing. Residue N4 is glycosylated (N-linked (GlcNAc...) asparagine). The chain crosses the membrane as a helical span at residues 26–46 (LLFALFLALYSLTMAMNGLII). At 47–55 (FITSWTDPK) the chain is on the cytoplasmic side. A helical transmembrane segment spans residues 56–76 (LNSPMYFFLGHLSLLDVCFIT). Residues 77 to 100 (TTIPQMLIHLVVRDHIVSFVCCMT) are Extracellular-facing. A disulfide bond links C98 and C190. Residues 101-121 (QMYFVFCVGVAECILLAFMAY) form a helical membrane-spanning segment. Residues 122–140 (DRYVAICYPLNYVPIISQK) lie on the Cytoplasmic side of the membrane. Residues 141-161 (VCVRLVGTAWFFGLINGIFLE) traverse the membrane as a helical segment. The Extracellular segment spans residues 162 to 198 (YISFREPFRRDNHIESFFCEAPIVIGLSCGDPQFSLW). A helical membrane pass occupies residues 199–218 (AIFADAIVVILSPMVLTVTS). Over 219-238 (YVHILATILSKASSSGRGKT) the chain is Cytoplasmic. Residues 239–259 (FSTCASHLTVVIFLYTSAMFS) traverse the membrane as a helical segment. At 260 to 272 (YMNPHSTHGPDKD) the chain is on the extracellular side. A helical transmembrane segment spans residues 273–293 (KPFSLLYTIITPMCNPIIYSF). Over 294–317 (RNKEIKEAMVRALGRTRLAQPQSV) the chain is Cytoplasmic.

It belongs to the G-protein coupled receptor 1 family.

It localises to the cell membrane. Odorant receptor. The sequence is that of Olfactory receptor 10AD1 (OR10AD1) from Homo sapiens (Human).